Reading from the N-terminus, the 1141-residue chain is DNA-directed RNA polymerase subunit beta (1141 aa).

This sequence belongs to the RNA polymerase beta chain family. In terms of assembly, the RNAP catalytic core consists of 2 alpha, 1 beta, 1 beta' and 1 omega subunit. When a sigma factor is associated with the core the holoenzyme is formed, which can initiate transcription.

The enzyme catalyses RNA(n) + a ribonucleoside 5'-triphosphate = RNA(n+1) + diphosphate. Its function is as follows. DNA-dependent RNA polymerase catalyzes the transcription of DNA into RNA using the four ribonucleoside triphosphates as substrates. This chain is DNA-directed RNA polymerase subunit beta, found in Frankia alni (strain DSM 45986 / CECT 9034 / ACN14a).